A 965-amino-acid chain; its full sequence is MATLPSIHAFWKLWWPTFSEERKMTVVQALRNGLTRKLFQITQIAQQILRWPPYIRERMTSSLGQSLVKTFQTLLGIRKALSRLCLTRNMNVDIFTMLLIPFKFLSQLCSQIVASANFVIQTFRHGLSRGLCLARCRNPETMRSGWSKHTLQMQNCSSTSPLMTPFQPQIARDLSNPHGLWMSTRNKLTRTGGSAIQQTSRYVRLAVRFSLLAAGAYISCVLARKALKEYVYRWELKSDQELPTREQSQISQVEQAMEQNGAMMVMKLNGPTAPILSLQDCLTKHVLVPEIVDEEGTVTQKEQSTFLIREFGPAVRNLVTLAKLEFGGIPKKTTANELTVWRFLVRKCEHANMNPTDSRTAISMALPYVFMPCRTDVGRASIPLRDESIEICRQYRAQFVEETPLRRVFNNPLSGKAWRNWVRHLGGLDDPALFQELKXGCLEEWLGVQSRRTRARHPKLRSHFKDTRHKTRRVFRIAGLGNLYEFGVHNNSAVNLERGLMERVFYVKDDKGELVSCPEPISGIFWKNLKGFRNSIVHHVGHRHPVSRETFLAYYTGPKRTMYEKAVNSLYEMPVSYDDAKLKTFVKAEKINLTKKADPVPRVIQPRAPRYNVELGRYLRPVEHPIYHAIDKIWGGPTIMKGYSVEQIGRHIENAFRSFTDPVAIGFDASRFDQHVSVEALRWEHSVYSRIYGYPELLTQLLRWQIHNRGTAYASDGAFNYQVDGKRMSGDMNISLGNCILATAITHDFVTKLGIPARLINNGDDNVLICPAVEVGRVRQELYRHWLNYGFEVISEEPVYILEQVEFCQMRPVFDGTQYTMMRDPRTTMSKDAYAVTPFNTPTAARRWMRAVGECGLSLTGGLPVKQEYYTALVKHGLDPKNIKQGKDFDSGLYYLSKLSNRKWQEVQESARYSFWLAFGYTPDEQRALEEYFKSWTPTFEWSTTGILAEIPECLLLKHNPLPPT.

A RdRp catalytic domain is found at 662 to 778; the sequence is PVAIGFDASR…ICPAVEVGRV (117 aa).

The protein belongs to the tombusviridae RNA polymerase family.

It carries out the reaction RNA(n) + a ribonucleoside 5'-triphosphate = RNA(n+1) + diphosphate. RNA-dependent RNA polymerase that plays an essential role in the virus replication. The protein is RNA-directed RNA polymerase of Zea mays (Maize).